The primary structure comprises 224 residues: Heme response regulator HssR (224 aa).

Residues 3 to 116 (KCLIVDDDYK…ELLFRIQAVL (114 aa)) enclose the Response regulatory domain. The residue at position 52 (Asp52) is a 4-aspartylphosphate. The segment at residues 124 to 222 (QDIIKLGNVT…VRGQGYRVIT (99 aa)) is a DNA-binding region (ompR/PhoB-type).

Post-translationally, phosphorylated by HssS.

The protein resides in the cytoplasm. In terms of biological role, member of the two-component regulatory system HssS/HssR involved in intracellular heme homeostasis and tempering of staphylococcal virulence. Phosphorylated HssR binds to a direct repeat sequence within hrtAB promoter and activates the expression of hrtAB, an efflux pump, in response to extracellular heme, hemin, hemoglobin or blood. In Staphylococcus haemolyticus (strain JCSC1435), this protein is Heme response regulator HssR (hssR).